The chain runs to 1183 residues: DNA-directed RNA polymerase subunit beta' (1183 aa).

Zn(2+) contacts are provided by Cys-60, Cys-62, Cys-75, and Cys-78. The Mg(2+) site is built by Asp-449, Asp-451, and Asp-453. Zn(2+) is bound by residues Cys-794, Cys-867, Cys-874, and Cys-877.

This sequence belongs to the RNA polymerase beta' chain family. In terms of assembly, the RNAP catalytic core consists of 2 alpha, 1 beta, 1 beta' and 1 omega subunit. When a sigma factor is associated with the core the holoenzyme is formed, which can initiate transcription. The cofactor is Mg(2+). Requires Zn(2+) as cofactor.

It catalyses the reaction RNA(n) + a ribonucleoside 5'-triphosphate = RNA(n+1) + diphosphate. Functionally, DNA-dependent RNA polymerase catalyzes the transcription of DNA into RNA using the four ribonucleoside triphosphates as substrates. The sequence is that of DNA-directed RNA polymerase subunit beta' from Caldanaerobacter subterraneus subsp. tengcongensis (strain DSM 15242 / JCM 11007 / NBRC 100824 / MB4) (Thermoanaerobacter tengcongensis).